Consider the following 472-residue polypeptide: Inactive CLIP domain-containing serine protease A3 (472 aa).

The next 2 membrane-spanning stretches (helical) occupy residues Ile-51–Met-71 and Leu-78–Ala-98. Asn-122, Asn-133, Asn-149, and Asn-152 each carry an N-linked (GlcNAc...) asparagine glycan. The Peptidase S1 domain maps to Val-223–Ser-470. Cystine bridges form between Cys-354/Cys-428, Cys-386/Cys-408, and Cys-418/Cys-446.

It belongs to the peptidase S1 family. CLIP subfamily. As to expression, expressed at highest levels in head and salivary gland. Expressed in ovary and carcass. Minimal expression in midgut.

The protein localises to the membrane. Functionally, probable inactive serine protease. Induces migration of cultured mouse embryonic fibroblasts. (Microbial infection) Promotes dengue virus type 2 replication in the host. The sequence is that of Inactive CLIP domain-containing serine protease A3 from Aedes aegypti (Yellowfever mosquito).